The chain runs to 221 residues: GTP cyclohydrolase III (221 aa).

Belongs to the archaeal-type GTP cyclohydrolase family.

The enzyme catalyses GTP + 3 H2O = 2-amino-5-formylamino-6-(5-phospho-D-ribosylamino)pyrimidin-4(3H)-one + 2 phosphate + 2 H(+). Functionally, catalyzes the formation of 2-amino-5-formylamino-6-ribofuranosylamino-4(3H)-pyrimidinone ribonucleotide monophosphate and inorganic phosphate from GTP. Also has an independent pyrophosphate phosphohydrolase activity. This chain is GTP cyclohydrolase III, found in Pyrobaculum islandicum (strain DSM 4184 / JCM 9189 / GEO3).